The following is a 3620-amino-acid chain: Cubilin (3620 aa).

Positions 1-20 are cleaved as a signal peptide; the sequence is MSSPFLWSLIILLTFAESNG. The propeptide at 21–32 is removed in mature form; it reads EAGGFELQRQKR. The tract at residues 39–46 is interaction with AMN; sequence PRMATERG. N-linked (GlcNAc...) asparagine glycosylation occurs at Asn-102. The 37-residue stretch at 129–165 folds into the EGF-like 1 domain; that stretch reads DKKVCSSNPCQNGGTCLNLHDSFFCICPSQWKGPLCS. 6 disulfide bridges follow: Cys-133/Cys-144, Cys-138/Cys-153, Cys-155/Cys-164, Cys-171/Cys-187, Cys-181/Cys-196, and Cys-198/Cys-207. One can recognise an EGF-like 2; calcium-binding domain in the interval 167-208; sequence DVNECQIYSGTPLGCQNGATCENTAGSYSCLCSPETHGPQCA. A glycan (N-linked (GlcNAc...) asparagine) is linked at Asn-253. Residues 260 to 301 enclose the EGF-like 3; calcium-binding domain; sequence DIDECNLQHAPCSPLVQCFNTQGSFYCGACPTGWQGNGYSCQ. Intrachain disulfides connect Cys-264–Cys-277, Cys-271–Cys-286, Cys-289–Cys-300, Cys-306–Cys-321, Cys-313–Cys-330, Cys-333–Cys-344, Cys-350–Cys-363, Cys-357–Cys-373, Cys-396–Cys-406, Cys-401–Cys-415, Cys-417–Cys-426, Cys-433–Cys-444, Cys-438–Cys-453, Cys-455–Cys-464, Cys-471–Cys-497, Cys-524–Cys-546, Cys-587–Cys-613, Cys-640–Cys-662, and Cys-705–Cys-730. The 44-residue stretch at 302 to 345 folds into the EGF-like 4; calcium-binding domain; that stretch reads DIDECKINNGGCSVVPPVMCVNTLGSYHCQACPPGYQGDGRVCT. EGF-like domains follow at residues 346–382 and 392–427; these read VIDI…YTGN and LSDT…INCT. N-linked (GlcNAc...) asparagine glycosylation is present at Asn-425. An EGF-like 7; calcium-binding domain is found at 429-465; the sequence is NINECLSNPCFNGGTCVDGVNAFSCECTRFWTGFLCQ. CUB domains follow at residues 471–583, 587–699, 705–812, 813–924, 928–1038, 1044–1158, 1162–1274, 1275–1386, 1388–1503, 1507–1616, 1617–1731, 1735–1847, and 1849–1960; these read CGGS…WETQ, CGGI…YLTS, CGGN…YQVA, CGGE…FSAA, CGEI…YEAT, CMED…WDGS, CGGN…YQQT, CRNV…WFIH, CGGE…WQAV, CGGI…FNQV, CGGH…YAAS, CGGT…FTKI, and GNDN…WFAV. N-linked (GlcNAc...) asparagine glycans are attached at residues Asn-708 and Asn-745. The cysteines at positions 757 and 775 are disulfide-linked. A glycan (N-linked (GlcNAc...) asparagine) is linked at Asn-777. Cys-813 and Cys-838 are joined by a disulfide. A glycan (N-linked (GlcNAc...) asparagine) is linked at Asn-853. Cystine bridges form between Cys-865–Cys-887 and Cys-928–Cys-954. N-linked (GlcNAc...) asparagine glycosylation is present at Asn-953. Residue Glu-976 coordinates Ca(2+). Residue Asn-980 is glycosylated (N-linked (GlcNAc...) asparagine). The cysteines at positions 981 and 1001 are disulfide-linked. Residues Asp-984, Asp-1023, Asp-1025, and Leu-1026 each coordinate Ca(2+). A disulfide bridge links Cys-1044 with Cys-1070. Ca(2+) contacts are provided by Glu-1092, Asp-1102, and Asp-1143. Residues Cys-1099 and Cys-1121 are joined by a disulfide bond. A disulfide bridge connects residues Cys-1162 and Cys-1188. Asn-1165 carries N-linked (GlcNAc...) asparagine glycosylation. Residue Glu-1210 participates in Ca(2+) binding. N-linked (GlcNAc...) asparagine glycosylation occurs at Asn-1214. The cysteines at positions 1215 and 1237 are disulfide-linked. Residues Asp-1218, Asp-1259, and Gln-1262 each coordinate Ca(2+). A disulfide bridge connects residues Cys-1275 and Cys-1303. Residues Asn-1304 and Asn-1316 are each glycosylated (N-linked (GlcNAc...) asparagine). Position 1325 (Glu-1325) interacts with Ca(2+). Residue Asn-1329 is glycosylated (N-linked (GlcNAc...) asparagine). Cys-1330 and Cys-1348 are oxidised to a cystine. Ca(2+) is bound by residues Asp-1333, Asp-1370, and Val-1372. 2 cysteine pairs are disulfide-bonded: Cys-1388-Cys-1414 and Cys-1441-Cys-1463. Asn-1497 is a glycosylation site (N-linked (GlcNAc...) asparagine). Residues Cys-1507 and Cys-1533 are joined by a disulfide bond. N-linked (GlcNAc...) asparagine glycosylation occurs at Asn-1548. Cystine bridges form between Cys-1560–Cys-1578, Cys-1617–Cys-1644, Cys-1672–Cys-1694, Cys-1735–Cys-1761, and Cys-1788–Cys-1809. An N-linked (GlcNAc...) asparagine glycan is attached at Asn-1643. N-linked (GlcNAc...) asparagine glycosylation is found at Asn-1799, Asn-1816, and Asn-1882. Cysteines 1902 and 1924 form a disulfide. N-linked (GlcNAc...) asparagine glycosylation occurs at Asn-1961. Intrachain disulfides connect Cys-1975/Cys-2003 and Cys-2029/Cys-2051. 14 CUB domains span residues 1975–2088, 2089–2210, 2214–2331, 2333–2445, 2449–2562, 2567–2684, 2686–2798, 2802–2916, 2917–3032, 3034–3147, 3154–3271, 3275–3392, 3392–3504, and 3508–3620; these read CGGF…FHKS, CGGY…YEAK, CGGN…YAIA, CGGR…FESS, CGGE…YTSS, CGGS…YSFT, CGGI…WNTQ, CGGI…FVSR, CGGN…YKIT, CGGV…FQQT, CGGY…YTTV, CGGT…IAGC, CNRE…WTSS, and CGGT…TWDS. N-linked (GlcNAc...) asparagine glycosylation is found at Asn-2082 and Asn-2114. Disulfide bonds link Cys-2089–Cys-2115, Cys-2214–Cys-2244, and Cys-2272–Cys-2294. A glycan (N-linked (GlcNAc...) asparagine) is linked at Asn-2317. Cys-2333 and Cys-2360 form a disulfide bridge. Residues Asn-2383 and Asn-2397 are each glycosylated (N-linked (GlcNAc...) asparagine). 3 disulfide bridges follow: Cys-2387–Cys-2408, Cys-2449–Cys-2475, and Cys-2502–Cys-2524. 4 N-linked (GlcNAc...) asparagine glycosylation sites follow: Asn-2528, Asn-2578, Asn-2589, and Asn-2607. A disulfide bridge links Cys-2567 with Cys-2596. Intrachain disulfides connect Cys-2625–Cys-2646, Cys-2686–Cys-2712, Cys-2739–Cys-2761, Cys-2802–Cys-2828, Cys-2857–Cys-2880, Cys-2917–Cys-2943, and Cys-2974–Cys-2996. Residue Asn-2810 is glycosylated (N-linked (GlcNAc...) asparagine). Asn-2920, Asn-2942, and Asn-2986 each carry an N-linked (GlcNAc...) asparagine glycan. Thr-3005 is subject to Phosphothreonine. 2 cysteine pairs are disulfide-bonded: Cys-3034–Cys-3061 and Cys-3088–Cys-3110. Asn-3039, Asn-3100, and Asn-3122 each carry an N-linked (GlcNAc...) asparagine glycan. 2 cysteine pairs are disulfide-bonded: Cys-3154-Cys-3182 and Cys-3212-Cys-3234. N-linked (GlcNAc...) asparagine glycans are attached at residues Asn-3265, Asn-3280, and Asn-3292. 2 disulfide bridges follow: Cys-3275/Cys-3303 and Cys-3329/Cys-3351. Asn-3354 is a glycosylation site (N-linked (GlcNAc...) asparagine). Cys-3392 and Cys-3418 are disulfide-bonded. 3 N-linked (GlcNAc...) asparagine glycosylation sites follow: Asn-3427, Asn-3454, and Asn-3530. 3 disulfides stabilise this stretch: Cys-3445–Cys-3467, Cys-3508–Cys-3534, and Cys-3561–Cys-3583.

Interacts with AMN. Component of the cubam complex composed of one CUBN trimer and one AMN chain. The cubam complex can dimerize. Interacts with LRP2 in a dual-receptor complex in a calcium-dependent manner. Found in a complex with PID1/PCLI1, LRP1 and CUBNI. Interacts with LRP1 and PID1/PCLI1. Post-translationally, the precursor is cleaved by a trans-Golgi proteinase furin, removing a propeptide. N-glycosylated. Detected in kidney cortex (at protein level). Detected in kidney, duodenum and jejunum.

It is found in the apical cell membrane. It localises to the cell membrane. The protein localises to the membrane. The protein resides in the coated pit. Its subcellular location is the endosome. It is found in the lysosome membrane. Functionally, endocytic receptor which plays a role in lipoprotein, vitamin and iron metabolism by facilitating their uptake. Acts together with LRP2 to mediate endocytosis of high-density lipoproteins, GC, hemoglobin, ALB, TF and SCGB1A1. Acts together with AMN to mediate endocytosis of the CBLIF-cobalamin complex. Binds to ALB, MB, Kappa and lambda-light chains, TF, hemoglobin, GC, SCGB1A1, APOA1, high density lipoprotein, and the CBLIF-cobalamin complex. Ligand binding requires calcium. Serves as important transporter in several absorptive epithelia, including intestine, renal proximal tubules and embryonic yolk sac. May play an important role in the development of the peri-implantation embryo through internalization of APOA1 and cholesterol. Binds to LGALS3 at the maternal-fetal interface. This chain is Cubilin (CUBN), found in Canis lupus familiaris (Dog).